The sequence spans 80 residues: NADH-ubiquinone oxidoreductase chain 5 (80 aa).

The next 2 membrane-spanning stretches (helical) occupy residues 4–24 (ISFL…LNFM) and 44–64 (IVMT…VLLI).

The protein belongs to the complex I subunit 5 family.

It is found in the mitochondrion inner membrane. The enzyme catalyses a ubiquinone + NADH + 5 H(+)(in) = a ubiquinol + NAD(+) + 4 H(+)(out). Functionally, core subunit of the mitochondrial membrane respiratory chain NADH dehydrogenase (Complex I) that is believed to belong to the minimal assembly required for catalysis. Complex I functions in the transfer of electrons from NADH to the respiratory chain. The immediate electron acceptor for the enzyme is believed to be ubiquinone. This is NADH-ubiquinone oxidoreductase chain 5 (ND5) from Ceratitis capitata (Mediterranean fruit fly).